A 416-amino-acid polypeptide reads, in one-letter code: UDP-N-acetylglucosamine 1-carboxyvinyltransferase (416 aa).

Residue 22 to 23 (KN) participates in phosphoenolpyruvate binding. R92 contributes to the UDP-N-acetyl-alpha-D-glucosamine binding site. C116 (proton donor) is an active-site residue. C116 carries the 2-(S-cysteinyl)pyruvic acid O-phosphothioketal modification. Residues 121–125 (RPIDQ), D304, and I326 contribute to the UDP-N-acetyl-alpha-D-glucosamine site.

This sequence belongs to the EPSP synthase family. MurA subfamily.

It localises to the cytoplasm. The enzyme catalyses phosphoenolpyruvate + UDP-N-acetyl-alpha-D-glucosamine = UDP-N-acetyl-3-O-(1-carboxyvinyl)-alpha-D-glucosamine + phosphate. It functions in the pathway cell wall biogenesis; peptidoglycan biosynthesis. Functionally, cell wall formation. Adds enolpyruvyl to UDP-N-acetylglucosamine. The polypeptide is UDP-N-acetylglucosamine 1-carboxyvinyltransferase (Desulfatibacillum aliphaticivorans).